The chain runs to 184 residues: MLDAFSRSVVSADAKTAPVGGSDLAGLRSYVRDGNKRLDAVNAITSNASCIVSDAVTGMICENTGLIQAGGNCYPNRRMAACLRDGEIVLRYISYALLAGDASVLDDRCLNGLKETYIALGVPTQSAGRAVAIMKASATAHIGETNTPGLGGKRFRKMETTQGDCAALVAEAGAYFDRVIGAIS.

(2R,3E)-phycoerythrobilin contacts are provided by Cys50 and Cys61. N4-methylasparagine is present on Asn72. The (2R,3E)-phycoerythrobilin site is built by Cys82 and Cys165.

The protein belongs to the phycobiliprotein family. Heterodimer of an alpha and a beta chain. Post-translationally, contains three covalently linked phycoerythrobilin chromophores.

The protein localises to the cellular thylakoid membrane. In terms of biological role, light-harvesting photosynthetic bile pigment-protein from the phycobiliprotein complex. The sequence is that of C-phycoerythrin class 1 subunit beta (cpeB) from Synechococcus sp. (strain WH8020).